A 250-amino-acid polypeptide reads, in one-letter code: Virulence plasmid protein pGP6-D-related protein (250 aa).

It belongs to the UPF0137 (pGP6-D) family.

The sequence is that of Virulence plasmid protein pGP6-D-related protein from Chlamydia pneumoniae (Chlamydophila pneumoniae).